We begin with the raw amino-acid sequence, 1171 residues long: ATP-dependent helicase/deoxyribonuclease subunit B (1171 aa).

The region spanning Met-1–Arg-301 is the UvrD-like helicase ATP-binding domain. Gly-8–Ser-15 contacts ATP. The UvrD-like helicase C-terminal domain maps to Met-281–Asp-587. Residues Cys-805, Cys-1129, Cys-1132, and Cys-1138 each coordinate [4Fe-4S] cluster.

The protein belongs to the helicase family. AddB/RexB type 1 subfamily. Heterodimer of AddA and AddB. The cofactor is Mg(2+). [4Fe-4S] cluster is required as a cofactor.

Functionally, the heterodimer acts as both an ATP-dependent DNA helicase and an ATP-dependent, dual-direction single-stranded exonuclease. Recognizes the chi site generating a DNA molecule suitable for the initiation of homologous recombination. The AddB subunit has 5' -&gt; 3' nuclease activity but not helicase activity. The chain is ATP-dependent helicase/deoxyribonuclease subunit B from Bacillus mycoides (strain KBAB4) (Bacillus weihenstephanensis).